The following is a 641-amino-acid chain: XK-related protein 6 (641 aa).

2 disordered regions span residues L20–E47 and R84–P120. The span at P34–S46 shows a compositional bias: gly residues. Residues P107–P120 are compositionally biased toward pro residues. 7 consecutive transmembrane segments (helical) span residues L130–A150, Y159–L179, T318–Y338, V372–V392, W413–V433, M442–F462, and A473–L493.

This sequence belongs to the XK family.

Its subcellular location is the cell membrane. The chain is XK-related protein 6 from Homo sapiens (Human).